We begin with the raw amino-acid sequence, 567 residues long: Proline--tRNA ligase (567 aa).

This sequence belongs to the class-II aminoacyl-tRNA synthetase family. ProS type 1 subfamily. Homodimer.

It is found in the cytoplasm. It catalyses the reaction tRNA(Pro) + L-proline + ATP = L-prolyl-tRNA(Pro) + AMP + diphosphate. Functionally, catalyzes the attachment of proline to tRNA(Pro) in a two-step reaction: proline is first activated by ATP to form Pro-AMP and then transferred to the acceptor end of tRNA(Pro). As ProRS can inadvertently accommodate and process non-cognate amino acids such as alanine and cysteine, to avoid such errors it has two additional distinct editing activities against alanine. One activity is designated as 'pretransfer' editing and involves the tRNA(Pro)-independent hydrolysis of activated Ala-AMP. The other activity is designated 'posttransfer' editing and involves deacylation of mischarged Ala-tRNA(Pro). The misacylated Cys-tRNA(Pro) is not edited by ProRS. The protein is Proline--tRNA ligase of Stenotrophomonas maltophilia (strain R551-3).